Here is a 127-residue protein sequence, read N- to C-terminus: MERITSLVFFASFLIIFVSGVNQTRADSCDESLGLCETCDERCQAKHGPSCISKCDGEVGMLSCTCTYECGPPLPPKGNVCSGGTGMCSGKCPYKCCDTSCAQKYNGGRGFCNSFGNYNFCQCEYPC.

The N-terminal stretch at 1 to 26 (MERITSLVFFASFLIIFVSGVNQTRA) is a signal peptide. Cystine bridges form between C29–C70, C36–C55, C39–C64, C43–C66, C81–C127, C92–C112, C97–C121, and C101–C123.

This sequence belongs to the DEFL family.

Its subcellular location is the secreted. The sequence is that of Putative defensin-like protein 180 (LCR58) from Arabidopsis thaliana (Mouse-ear cress).